The primary structure comprises 224 residues: Ribose-5-phosphate isomerase A 2 (224 aa).

Substrate-binding positions include 27–30 (SGST), 83–86 (DGTD), and 96–99 (KGGG). The active-site Proton acceptor is the Glu105. Position 123 (Lys123) interacts with substrate.

Belongs to the ribose 5-phosphate isomerase family. Homodimer.

It carries out the reaction aldehydo-D-ribose 5-phosphate = D-ribulose 5-phosphate. It participates in carbohydrate degradation; pentose phosphate pathway; D-ribose 5-phosphate from D-ribulose 5-phosphate (non-oxidative stage): step 1/1. In terms of biological role, catalyzes the reversible conversion of ribose-5-phosphate to ribulose 5-phosphate. This chain is Ribose-5-phosphate isomerase A 2, found in Oceanobacillus iheyensis (strain DSM 14371 / CIP 107618 / JCM 11309 / KCTC 3954 / HTE831).